A 397-amino-acid chain; its full sequence is MSKIKVEELTKIFGKKASKASSLLSQGKSKTDILKETGATIGVNKASFSVEEGEIFVIMGLSGSGKSTLVRLLNRLIEPTSGKIWLDGKELSSLNKKELLEVRRKSMSMVFQNFGLFPNRTINRNVEYGLEIQGMDKEEREKNAAESLALVGLAGYGDQYPSQLSGGMQQRVGLARALANNPDILLMDEAFSALDPLNRKDMQDQLLDLQDKMKKTIIFITHDLDEALRIGDHIMIMRDGSVVQTGSPEEILAHPANEYVEKFIEDVDRSKVYTASNVMIRPEIVNFEKDGPRVALKRMREAGTSSVFVVKRNRELVGIVHAAEVSKLVKENITSLETALHRDVPTTGLDTPLAEIMDTISTTTIPIAVTEDGKLKGIIIRGSVLAALSGNEVNVNA.

The region spanning 28 to 264 is the ABC transporter domain; it reads KSKTDILKET…PANEYVEKFI (237 aa). Position 60–67 (60–67) interacts with ATP; it reads GLSGSGKS. 2 consecutive CBS domains span residues 279 to 335 and 340 to 395; these read MIRP…NITS and LHRD…EVNV.

The protein belongs to the ABC transporter superfamily. In terms of assembly, the complex is composed of two ATP-binding proteins (GbuA), two transmembrane proteins (GbuB) and a solute-binding protein (GbuC).

The enzyme catalyses a quaternary ammonium(out) + ATP + H2O = a quaternary ammonium(in) + ADP + phosphate + H(+). The complex is activated by an osmotic gradient or by low temperature. Functionally, part of the ABC transporter complex GbuABC involved in glycine betaine uptake. Responsible for energy coupling to the transport system. Involved, with BetL and OpuC, in osmoprotection and cryoprotection of Listeria. Can also uptake carnitine when carnitine is abundant in the growth medium. The sequence is that of Glycine betaine/carnitine transport ATP-binding protein GbuA (gbuA) from Listeria monocytogenes serotype 1/2a (strain 10403S).